A 287-amino-acid polypeptide reads, in one-letter code: 2-dehydro-3-deoxyphosphooctonate aldolase (287 aa).

It belongs to the KdsA family.

The protein resides in the cytoplasm. It carries out the reaction D-arabinose 5-phosphate + phosphoenolpyruvate + H2O = 3-deoxy-alpha-D-manno-2-octulosonate-8-phosphate + phosphate. It functions in the pathway carbohydrate biosynthesis; 3-deoxy-D-manno-octulosonate biosynthesis; 3-deoxy-D-manno-octulosonate from D-ribulose 5-phosphate: step 2/3. It participates in bacterial outer membrane biogenesis; lipopolysaccharide biosynthesis. The chain is 2-dehydro-3-deoxyphosphooctonate aldolase from Nitrobacter hamburgensis (strain DSM 10229 / NCIMB 13809 / X14).